Reading from the N-terminus, the 296-residue chain is Adrenocorticotropic hormone receptor (296 aa).

The Extracellular segment spans residues 1–23 (MKHIINSYEHTNDTARNNSDCPD). Residues N12 and N17 are each glycosylated (N-linked (GlcNAc...) asparagine). Disulfide bonds link C21/C253 and C245/C251. Residues 24 to 49 (VVLPEEIFFTISVIGILENLIVLLAV) traverse the membrane as a helical segment. Residues 50–58 (IKNKNLQSP) lie on the Cytoplasmic side of the membrane. A helical transmembrane segment spans residues 59–79 (MYFFICSLAISDMLGSLYKIL). Over 80-104 (ENILIMFRNMGYLKPRGSFESTADD) the chain is Extracellular. A helical membrane pass occupies residues 105–126 (IIDCMFILSLLGSIFSLSVIAA). Over 127–147 (DRYITIFHALQYHSIVTMRRT) the chain is Cytoplasmic. Residues 148–168 (IITLTIIWMFCTGSGITMVIF) traverse the membrane as a helical segment. The Extracellular portion of the chain corresponds to 169–180 (SHHIPTVLTFTS). Residues 181 to 199 (LFPLMLVFILCLYIHMFLL) form a helical membrane-spanning segment. The Cytoplasmic portion of the chain corresponds to 200–217 (ARSHARKISTLPRTNMKG). Residues 218-244 (AMTLTILLGVFIFCWAPFVLHVLLMTF) traverse the membrane as a helical segment. Residues 245-256 (CPNNPYCVCYMS) are Extracellular-facing. Residues 257–278 (LFQVNGMLIMCNAVIDPFIYAF) traverse the membrane as a helical segment. At 279 to 296 (RSPELRDAFKRMLFCNRY) the chain is on the cytoplasmic side. C293 carries S-palmitoyl cysteine lipidation.

It belongs to the G-protein coupled receptor 1 family. Homodimer. Interacts with corticotropin (ACTH). Interacts with MRAP; this interaction targets MC2R to the plasma membrane. Interacts with MRAP2; competing with MRAP for binding to MC2R and impairing the binding of corticotropin (ACTH). Ubiquitinated by MGRN1 that may be involved in post-endocytic trafficking and/or degradation of internalized receptor.

The protein resides in the cell membrane. In terms of biological role, hormone receptor primarily expressed in adrenal cortex that plays a key role in regulating adrenocortical function. Upon corticotropin (ACTH) binding, facilitates the release of adrenal glucocorticoids, including cortisol and corticosterone. In addition, MC2R is required for fetal and neonatal adrenal gland development. Mechanistically, activates adenylate cyclase (cAMP), the MAPK cascade as well as the cAMP-dependent protein kinase A pathway leading to steroidogenic factor 1/NR5A1-mediated transcriptional activation. The sequence is that of Adrenocorticotropic hormone receptor (Mc2r) from Mus musculus (Mouse).